The sequence spans 248 residues: DNA polymerase sliding clamp (248 aa).

The protein belongs to the PCNA family. Homotrimer. The subunits circularize to form a toroid; DNA passes through its center. Replication factor C (RFC) is required to load the toroid on the DNA.

In terms of biological role, sliding clamp subunit that acts as a moving platform for DNA processing. Responsible for tethering the catalytic subunit of DNA polymerase and other proteins to DNA during high-speed replication. The sequence is that of DNA polymerase sliding clamp from Cenarchaeum symbiosum (strain A).